Reading from the N-terminus, the 216-residue chain is NADH-quinone oxidoreductase subunit C (216 aa).

This sequence belongs to the complex I 30 kDa subunit family. NDH-1 is composed of 14 different subunits. Subunits NuoB, C, D, E, F, and G constitute the peripheral sector of the complex.

The protein resides in the cell inner membrane. It carries out the reaction a quinone + NADH + 5 H(+)(in) = a quinol + NAD(+) + 4 H(+)(out). Its function is as follows. NDH-1 shuttles electrons from NADH, via FMN and iron-sulfur (Fe-S) centers, to quinones in the respiratory chain. The immediate electron acceptor for the enzyme in this species is believed to be ubiquinone. Couples the redox reaction to proton translocation (for every two electrons transferred, four hydrogen ions are translocated across the cytoplasmic membrane), and thus conserves the redox energy in a proton gradient. This chain is NADH-quinone oxidoreductase subunit C, found in Francisella tularensis subsp. holarctica (strain OSU18).